Reading from the N-terminus, the 537-residue chain is CTP synthase (537 aa).

Residues 1–265 (MTKYIFVTGG…GKYLTKRLKL (265 aa)) are amidoligase domain. Residue S13 coordinates CTP. Residue S13 participates in UTP binding. 14–19 (GLGKGI) serves as a coordination point for ATP. Position 54 (Y54) interacts with L-glutamine. Residue D71 coordinates ATP. Mg(2+) contacts are provided by D71 and E139. Residues 146 to 148 (DIE), 186 to 191 (KTKPTQ), and K222 each bind CTP. UTP-binding positions include 186-191 (KTKPTQ) and K222. Residues 290 to 532 (EIAIVGKYVK…VRAAKEYKQE (243 aa)) enclose the Glutamine amidotransferase type-1 domain. An L-glutamine-binding site is contributed by G351. C378 serves as the catalytic Nucleophile; for glutamine hydrolysis. L-glutamine contacts are provided by residues 379-382 (FGFQ), E402, and R459. Active-site residues include H505 and E507.

It belongs to the CTP synthase family. Homotetramer.

It carries out the reaction UTP + L-glutamine + ATP + H2O = CTP + L-glutamate + ADP + phosphate + 2 H(+). The catalysed reaction is L-glutamine + H2O = L-glutamate + NH4(+). The enzyme catalyses UTP + NH4(+) + ATP = CTP + ADP + phosphate + 2 H(+). Its pathway is pyrimidine metabolism; CTP biosynthesis via de novo pathway; CTP from UDP: step 2/2. Allosterically activated by GTP, when glutamine is the substrate; GTP has no effect on the reaction when ammonia is the substrate. The allosteric effector GTP functions by stabilizing the protein conformation that binds the tetrahedral intermediate(s) formed during glutamine hydrolysis. Inhibited by the product CTP, via allosteric rather than competitive inhibition. Functionally, catalyzes the ATP-dependent amination of UTP to CTP with either L-glutamine or ammonia as the source of nitrogen. Regulates intracellular CTP levels through interactions with the four ribonucleotide triphosphates. The chain is CTP synthase from Pyrococcus furiosus (strain ATCC 43587 / DSM 3638 / JCM 8422 / Vc1).